A 1162-amino-acid chain; its full sequence is Spike glycoprotein (1162 aa).

A signal peptide spans M1–A18. Topologically, residues V19–Y1095 are extracellular. 21 N-linked (GlcNAc...) asparagine; by host glycosylation sites follow: N51, N77, N103, N144, N163, N178, N212, N237, N247, N264, N276, N306, N425, N447, N513, N530, N579, N591, N669, N676, and N714. The heptad repeat 1 (HR1) stretch occupies residues I769 to L874. The stretch at Q822–V866 forms a coiled coil. N947, N960, N979, N1014, N1038, N1051, and N1074 each carry an N-linked (GlcNAc...) asparagine; by host glycan. The segment at N1024–I1105 is heptad repeat 2 (HR2). Positions P1055–L1083 form a coiled coil. A helical transmembrane segment spans residues V1096 to F1116. Residues M1117–V1162 lie on the Cytoplasmic side of the membrane. The Di-lysine motif motif lies at K1159–V1162.

Belongs to the gammacoronaviruses spike protein family. Homotrimer; each monomer consists of a S1 and a S2 subunit. The resulting peplomers protrude from the virus surface as spikes. Post-translationally, specific enzymatic cleavages in vivo yield mature proteins. The precursor is processed into S1 and S2 by host cell furin or furin-like protease to yield the mature S1 and S2 proteins. The cleavage site between S1 and S2 requires the optimal sequence [KR]-X-[KR]-R. Additionally, a second cleavage leads to the release of a fusion peptide after viral attachment to host cell receptor.

Its subcellular location is the virion membrane. It is found in the host endoplasmic reticulum-Golgi intermediate compartment membrane. Functionally, attaches the virion to the host cell membrane by interacting with sialic acids, initiating the infection. Mediates fusion of the virion and cellular membranes by acting as a class I viral fusion protein. Under the current model, the protein has at least 3 conformational states: pre-fusion native state, pre-hairpin intermediate state, and post-fusion hairpin state. During viral and target cell membrane fusion, the coiled coil regions (heptad repeats) assume a trimer-of-hairpins structure, positioning the fusion peptide in close proximity to the C-terminal region of the ectodomain. The formation of this structure appears to drive apposition and subsequent fusion of viral and target cell membranes. Its function is as follows. Acts as a viral fusion peptide after S2 cleavage occurring upon virus endocytosis. The chain is Spike glycoprotein from Avian infectious bronchitis virus (strain Beaudette) (IBV).